The chain runs to 241 residues: Uracil-DNA glycosylase (241 aa).

Catalysis depends on Asp-71, which acts as the Proton acceptor.

This sequence belongs to the uracil-DNA glycosylase (UDG) superfamily. UNG family.

The protein resides in the cytoplasm. The catalysed reaction is Hydrolyzes single-stranded DNA or mismatched double-stranded DNA and polynucleotides, releasing free uracil.. Excises uracil residues from the DNA which can arise as a result of misincorporation of dUMP residues by DNA polymerase or due to deamination of cytosine. The polypeptide is Uracil-DNA glycosylase (Xanthomonas axonopodis pv. citri (strain 306)).